A 232-amino-acid polypeptide reads, in one-letter code: Peptidyl-prolyl cis-trans isomerase FKBP18, chloroplastic (232 aa).

The region spanning 108–226 (GSTAQVHFDC…ELNIELLRVT (119 aa)) is the PPIase FKBP-type domain.

This sequence belongs to the FKBP-type PPIase family.

It localises to the plastid. Its subcellular location is the chloroplast thylakoid lumen. It carries out the reaction [protein]-peptidylproline (omega=180) = [protein]-peptidylproline (omega=0). Its function is as follows. PPIases accelerate the folding of proteins. It catalyzes the cis-trans isomerization of proline imidic peptide bonds in oligopeptides. The chain is Peptidyl-prolyl cis-trans isomerase FKBP18, chloroplastic (FKBP18) from Arabidopsis thaliana (Mouse-ear cress).